The chain runs to 285 residues: Eukaryotic translation initiation factor 2 subunit beta (285 aa).

Residues 30–69 form a disordered region; it reads DAAVNGKENGSGDDLFAGLKKKKKKSKSVSADAEAEKEPT. S40 is subject to Phosphoserine. A Phosphothreonine modification is found at T69. 3 positions are modified to phosphoserine: S80, S92, and S112. The residue at position 116 (T116) is a Phosphothreonine. Residue S118 is modified to Phosphoserine. The C4-type zinc-finger motif lies at 236-262; it reads CKTCKSINTELKREQSNRLFFMVCKSC.

This sequence belongs to the eIF-2-beta/eIF-5 family. In terms of assembly, eukaryotic translation initiation factor 2 eIF2 is a heterotrimeric complex composed of an alpha, a beta and a gamma subunit. The factors eIF-1, eIF-2, eIF-3, TIF5/eIF-5 and methionyl-tRNAi form a multifactor complex (MFC) that may bind to the 40S ribosome. Interacts with GCD6. Interacts with GCD1. Interacts with TIF5/eIF-5. Interacts with CDC123.

It localises to the cytoplasm. Its subcellular location is the cytosol. In terms of biological role, component of the eIF2 complex that functions in the early steps of protein synthesis by forming a ternary complex with GTP and initiator tRNA. This complex binds to a 40S ribosomal subunit, followed by mRNA binding to form a 43S pre-initiation complex (43S PIC). Junction of the 60S ribosomal subunit to form the 80S initiation complex is preceded by hydrolysis of the GTP bound to eIF2 and release of an eIF2-GDP binary complex. In order for eIF2 to recycle and catalyze another round of initiation, the GDP bound to eIF2 must exchange with GTP by way of a reaction catalyzed by eIF2B. The chain is Eukaryotic translation initiation factor 2 subunit beta (SUI3) from Saccharomyces cerevisiae (strain ATCC 204508 / S288c) (Baker's yeast).